Reading from the N-terminus, the 607-residue chain is Glucose-6-phosphate isomerase, glycosomal (607 aa).

Glutamate 411 functions as the Proton donor in the catalytic mechanism. Catalysis depends on residues histidine 442 and lysine 571. Positions 605–607 (SHL) match the Microbody targeting signal motif.

It belongs to the GPI family. In terms of assembly, homodimer.

Its subcellular location is the glycosome. It carries out the reaction alpha-D-glucose 6-phosphate = beta-D-fructose 6-phosphate. The protein operates within carbohydrate degradation; glycolysis; D-glyceraldehyde 3-phosphate and glycerone phosphate from D-glucose: step 2/4. In Trypanosoma brucei brucei, this protein is Glucose-6-phosphate isomerase, glycosomal (PGI).